A 560-amino-acid chain; its full sequence is Nibrin homolog (560 aa).

In terms of domain architecture, FHA spans 25–87; sequence YKVGRKDCDV…YGTFFNKVQG (63 aa). A BRCT domain is found at 115–190; that stretch reads TFRLSFVPIV…KQIVLGDWFK (76 aa).

This sequence belongs to the Nibrin family. Component of the MRN complex composed of two heterodimers RAD50 and MRE11 associated with a single NBS1. As to expression, mostly expressed in the shoot apex and young flower, but also in young leaves, root tips and stamen, tissues where frequent cell division or meiosis may occur.

Its subcellular location is the nucleus. The protein resides in the chromosome. Its function is as follows. Component of the MRN complex, which plays a central role in double-strand break (DSB) repair, DNA recombination, maintenance of telomere integrity and meiosis. The MRN complex is involved in the repair of DNA double-strand breaks (DSBs) via homologous recombination (HR), an error-free mechanism which primarily occurs during S and G2 phases. The complex (1) mediates the end resection of damaged DNA, which generates proper single-stranded DNA, a key initial steps in HR, and is (2) required for the recruitment of other repair factors and efficient activation of ATM and ATR upon DNA damage. The MRN complex possesses single-strand endonuclease activity and double-strand-specific 3'-5' exonuclease activity, which are provided by MRE11, to initiate end resection, which is required for single-strand invasion and recombination. Within the MRN complex, NBS1 acts as a protein-protein adapter, which specifically recognizes and binds phosphorylated proteins, promoting their recruitment to DNA damage sites. Recruits MRE11 and RAD50 components of the MRN complex to DSBs in response to DNA damage. The protein is Nibrin homolog of Oryza sativa subsp. japonica (Rice).